Consider the following 121-residue polypeptide: uncharacterized protein (121 aa).

Residues 1–19 (MKKFALATIFALATTSAFA) form the signal peptide.

This sequence to E.coli YgiW.

It is found in the periplasm. This is an uncharacterized protein from Haemophilus influenzae (strain ATCC 51907 / DSM 11121 / KW20 / Rd).